The following is a 485-amino-acid chain: E3 ubiquitin-protein ligase RNF8 (485 aa).

The FHA domain occupies 38–92; the sequence is VTVGRGFGVTYQLVSKICPLMISRNHCVLKQNPEGQWTIMDNKSLNGVWLNRARL. The segment at 68–72 is required for interaction with PIWIL1; the sequence is QNPEG. A Phosphoserine modification is found at serine 157. Residues 181–220 are disordered; it reads CESGQPVKSQGKGEVASTPSDNLDPKLTALEPSKTTGAPI. The RING-type zinc-finger motif lies at 403 to 441; it reads CIICSEYFIEAVTLNCAHSFCSYCINEWMKRKIECPICR.

This sequence belongs to the RNF8 family. As to quaternary structure, homodimer. Forms a E2-E3 ubiquitin ligase complex composed of the RNF8 homodimer and a E2 heterodimer of UBE2N and UBE2V2. Interacts with class III E2s, including UBE2E1, UBE2E2, and UBE2E3 and with UBE2N. Interacts with RXRA. Interacts (via FHA domain) with ATM-phosphorylated MDC1. Interacts (via FHA domain) with 'Thr-4827' phosphorylated HERC2 (via C-terminus). Interacts with PIWIL1; leading to sequester RNF8 in the cytoplasm. Interacts with WRAP53/TCAB1. (Microbial infection) Interacts (via FHA domain) with phosphorylated human herpesvirus 1 ICP0 protein; leading to RNF8 degradation by the proteasome. Autoubiquitinated through 'Lys-48' and 'Lys-63' of ubiquitin. 'Lys-63' polyubiquitination is mediated by UBE2N. 'Lys-29'-type polyubiquitination is also observed, but it doesn't require its own functional RING-type zinc finger. In terms of tissue distribution, ubiquitous. In fetal tissues, highest expression in brain, thymus and liver. In adult tissues, highest levels in brain and testis, lowest levels in peripheral blood cells.

It localises to the nucleus. The protein resides in the cytoplasm. Its subcellular location is the midbody. The protein localises to the chromosome. It is found in the telomere. It catalyses the reaction S-ubiquitinyl-[E2 ubiquitin-conjugating enzyme]-L-cysteine + [acceptor protein]-L-lysine = [E2 ubiquitin-conjugating enzyme]-L-cysteine + N(6)-ubiquitinyl-[acceptor protein]-L-lysine.. Its pathway is protein modification; protein ubiquitination. Its function is as follows. E3 ubiquitin-protein ligase that plays a key role in DNA damage signaling via 2 distinct roles: by mediating the 'Lys-63'-linked ubiquitination of histones H2A and H2AX and promoting the recruitment of DNA repair proteins at double-strand breaks (DSBs) sites, and by catalyzing 'Lys-48'-linked ubiquitination to remove target proteins from DNA damage sites. Following DNA DSBs, it is recruited to the sites of damage by ATM-phosphorylated MDC1 and catalyzes the 'Lys-63'-linked ubiquitination of histones H2A and H2AX, thereby promoting the formation of TP53BP1 and BRCA1 ionizing radiation-induced foci (IRIF). Also controls the recruitment of UIMC1-BRCC3 (RAP80-BRCC36) and PAXIP1/PTIP to DNA damage sites. Promotes the recruitment of NBN to DNA damage sites by catalyzing 'Lys-6'-linked ubiquitination of NBN. Also recruited at DNA interstrand cross-links (ICLs) sites and catalyzes 'Lys-63'-linked ubiquitination of histones H2A and H2AX, leading to recruitment of FAAP20/C1orf86 and Fanconi anemia (FA) complex, followed by interstrand cross-link repair. H2A ubiquitination also mediates the ATM-dependent transcriptional silencing at regions flanking DSBs in cis, a mechanism to avoid collision between transcription and repair intermediates. Promotes the formation of 'Lys-63'-linked polyubiquitin chains via interactions with the specific ubiquitin-conjugating UBE2N/UBC13 and ubiquitinates non-histone substrates such as PCNA. Substrates that are polyubiquitinated at 'Lys-63' are usually not targeted for degradation. Also catalyzes the formation of 'Lys-48'-linked polyubiquitin chains via interaction with the ubiquitin-conjugating UBE2L6/UBCH8, leading to degradation of substrate proteins such as CHEK2, JMJD2A/KDM4A and KU80/XRCC5: it is still unclear how the preference toward 'Lys-48'- versus 'Lys-63'-linked ubiquitination is regulated but it could be due to RNF8 ability to interact with specific E2 specific ligases. For instance, interaction with phosphorylated HERC2 promotes the association between RNF8 and UBE2N/UBC13 and favors the specific formation of 'Lys-63'-linked ubiquitin chains. Promotes non-homologous end joining (NHEJ) by promoting the 'Lys-48'-linked ubiquitination and degradation the of KU80/XRCC5. Following DNA damage, mediates the ubiquitination and degradation of JMJD2A/KDM4A in collaboration with RNF168, leading to unmask H4K20me2 mark and promote the recruitment of TP53BP1 at DNA damage sites. Following DNA damage, mediates the ubiquitination and degradation of POLD4/p12, a subunit of DNA polymerase delta. In the absence of POLD4, DNA polymerase delta complex exhibits higher proofreading activity. In addition to its function in damage signaling, also plays a role in higher-order chromatin structure by mediating extensive chromatin decondensation. Involved in the activation of ATM by promoting histone H2B ubiquitination, which indirectly triggers histone H4 'Lys-16' acetylation (H4K16ac), establishing a chromatin environment that promotes efficient activation of ATM kinase. Required in the testis, where it plays a role in the replacement of histones during spermatogenesis. At uncapped telomeres, promotes the joining of deprotected chromosome ends by inducing H2A ubiquitination and TP53BP1 recruitment, suggesting that it may enhance cancer development by aggravating telomere-induced genome instability in case of telomeric crisis. Promotes the assembly of RAD51 at DNA DSBs in the absence of BRCA1 and TP53BP1 Also involved in class switch recombination in immune system, via its role in regulation of DSBs repair. May be required for proper exit from mitosis after spindle checkpoint activation and may regulate cytokinesis. May play a role in the regulation of RXRA-mediated transcriptional activity. Not involved in RXRA ubiquitination by UBE2E2. This chain is E3 ubiquitin-protein ligase RNF8, found in Homo sapiens (Human).